The primary structure comprises 477 residues: Aspartyl/glutamyl-tRNA(Asn/Gln) amidotransferase subunit B (477 aa).

It belongs to the GatB/GatE family. GatB subfamily. As to quaternary structure, heterotrimer of A, B and C subunits.

It catalyses the reaction L-glutamyl-tRNA(Gln) + L-glutamine + ATP + H2O = L-glutaminyl-tRNA(Gln) + L-glutamate + ADP + phosphate + H(+). The enzyme catalyses L-aspartyl-tRNA(Asn) + L-glutamine + ATP + H2O = L-asparaginyl-tRNA(Asn) + L-glutamate + ADP + phosphate + 2 H(+). Allows the formation of correctly charged Asn-tRNA(Asn) or Gln-tRNA(Gln) through the transamidation of misacylated Asp-tRNA(Asn) or Glu-tRNA(Gln) in organisms which lack either or both of asparaginyl-tRNA or glutaminyl-tRNA synthetases. The reaction takes place in the presence of glutamine and ATP through an activated phospho-Asp-tRNA(Asn) or phospho-Glu-tRNA(Gln). The polypeptide is Aspartyl/glutamyl-tRNA(Asn/Gln) amidotransferase subunit B (Legionella pneumophila (strain Lens)).